The sequence spans 70 residues: DNA-directed RNA polymerase subunit omega (70 aa).

This sequence belongs to the RNA polymerase subunit omega family. In terms of assembly, the RNAP catalytic core consists of 2 alpha, 1 beta, 1 beta' and 1 omega subunit. When a sigma factor is associated with the core the holoenzyme is formed, which can initiate transcription.

The enzyme catalyses RNA(n) + a ribonucleoside 5'-triphosphate = RNA(n+1) + diphosphate. In terms of biological role, promotes RNA polymerase assembly. Latches the N- and C-terminal regions of the beta' subunit thereby facilitating its interaction with the beta and alpha subunits. In Methylobacillus flagellatus (strain ATCC 51484 / DSM 6875 / VKM B-1610 / KT), this protein is DNA-directed RNA polymerase subunit omega.